Consider the following 621-residue polypeptide: Zinc metalloproteinase-disintegrin-like TSV-DM (621 aa).

A signal peptide spans 1-20; the sequence is MIQVLLVTICLAVFPYQGSS. Residues 21 to 191 constitute a propeptide that is removed on maturation; the sequence is IILESGNVND…EASQSNLTPE (171 aa). Position 192 is a pyrrolidone carboxylic acid (Q192). Residues 200–396 form the Peptidase M12B domain; it reads KYVKFFLVAD…NMPQCILKKP (197 aa). A glycan (N-linked (GlcNAc...) asparagine) is linked at N219. Cystine bridges form between C311-C391, C351-C375, and C353-C358. Residue H336 participates in Zn(2+) binding. The active site involves E337. Zn(2+)-binding residues include H340 and H346. Residues 404–489 enclose the Disintegrin domain; that stretch reads PPVCGNYFVE…AECTDRFQRN (86 aa). Residues V406, N409, F411, E413, E416, and D419 each coordinate Ca(2+). 14 disulfide bridges follow: C407/C436, C418/C431, C420/C426, C430/C453, C444/C450, C449/C475, C462/C482, C469/C500, C493/C505, C512/C562, C527/C573, C540/C550, C557/C599, and C593/C605. A D/ECD-tripeptide motif is present at residues 468-470; it reads ECD. 5 residues coordinate Ca(2+): D470, M471, D473, D484, and R485. A glycan (N-linked (GlcNAc...) asparagine) is linked at N502.

It belongs to the venom metalloproteinase (M12B) family. P-III subfamily. P-IIIc sub-subfamily. Homodimer; disulfide-linked. The cofactor is Zn(2+). In terms of processing, the N-terminus is blocked. In terms of tissue distribution, expressed by the venom gland.

It is found in the secreted. Inhibited by EDTA and DTT, and partially inhibited by EGTA, but not inhibited by PMSF and NEM. Its function is as follows. Snake venom zinc metalloprotease that hydrolyzes the alpha-chain (FGA) and more slowly the beta-chain (FGB) of fibrinogen. Inhibits cell proliferation and induces cell morphologic changes transiently on human umbilical vein endothelial cells. The polypeptide is Zinc metalloproteinase-disintegrin-like TSV-DM (Trimeresurus stejnegeri (Chinese green tree viper)).